The sequence spans 198 residues: Holliday junction resolvase RecU (198 aa).

The segment at 1 to 21 (MVNYPHKLSSQKRQPSLSQPK) is disordered. The span at 11–21 (QKRQPSLSQPK) shows a compositional bias: polar residues. Residues T81, D83, E96, and Q115 each coordinate Mg(2+).

Belongs to the RecU family. It depends on Mg(2+) as a cofactor.

The protein resides in the cytoplasm. The catalysed reaction is Endonucleolytic cleavage at a junction such as a reciprocal single-stranded crossover between two homologous DNA duplexes (Holliday junction).. Endonuclease that resolves Holliday junction intermediates in genetic recombination. Cleaves mobile four-strand junctions by introducing symmetrical nicks in paired strands. Promotes annealing of linear ssDNA with homologous dsDNA. Required for DNA repair, homologous recombination and chromosome segregation. The polypeptide is Holliday junction resolvase RecU (Streptococcus pneumoniae (strain Taiwan19F-14)).